A 269-amino-acid polypeptide reads, in one-letter code: Putative phosphatase M6_Spy0533 (269 aa).

Aspartate 9 acts as the Nucleophile in catalysis. Residue aspartate 9 participates in Mg(2+) binding. A phosphate-binding site is contributed by isoleucine 10. Residue aspartate 11 coordinates Mg(2+). Residues 43–44 (TG) and lysine 196 contribute to the phosphate site. Aspartate 219 provides a ligand contact to Mg(2+). A phosphate-binding site is contributed by asparagine 222.

It depends on Mg(2+) as a cofactor.

The polypeptide is Putative phosphatase M6_Spy0533 (Streptococcus pyogenes serotype M6 (strain ATCC BAA-946 / MGAS10394)).